The following is a 936-amino-acid chain: Protein translocase subunit SecA (936 aa).

ATP contacts are provided by residues Q87, 105–109 (GEGKT), and D515. C920, C922, C931, and H932 together coordinate Zn(2+).

It belongs to the SecA family. As to quaternary structure, monomer and homodimer. Part of the essential Sec protein translocation apparatus which comprises SecA, SecYEG and auxiliary proteins SecDF-YajC and YidC. The cofactor is Zn(2+).

Its subcellular location is the cell inner membrane. It is found in the cytoplasm. It catalyses the reaction ATP + H2O + cellular proteinSide 1 = ADP + phosphate + cellular proteinSide 2.. In terms of biological role, part of the Sec protein translocase complex. Interacts with the SecYEG preprotein conducting channel. Has a central role in coupling the hydrolysis of ATP to the transfer of proteins into and across the cell membrane, serving both as a receptor for the preprotein-SecB complex and as an ATP-driven molecular motor driving the stepwise translocation of polypeptide chains across the membrane. The sequence is that of Protein translocase subunit SecA from Paraburkholderia xenovorans (strain LB400).